The chain runs to 160 residues: Major strawberry allergen Fra a 1.04 (160 aa).

This sequence belongs to the BetVI family. In terms of processing, phosphorylated in vivo. Phosphorylation prevents its activity as ribonuclease. As to expression, highly expressed in roots. Expressed a low levels in ripe red fruits.

Possesses ribonuclease activity in vitro. The sequence is that of Major strawberry allergen Fra a 1.04 from Fragaria ananassa (Strawberry).